Reading from the N-terminus, the 512-residue chain is tRNA modification GTPase gtpbp3, mitochondrial (512 aa).

One can recognise a TrmE-type G domain in the interval 246 to 434 (GANIAIVGPP…LLNLLKLNLK (189 aa)). GTP-binding positions include 253 to 260 (GPPNAGKS), 300 to 304 (DTAGL), and 375 to 378 (NKSD).

The protein belongs to the TRAFAC class TrmE-Era-EngA-EngB-Septin-like GTPase superfamily. TrmE GTPase family.

The protein localises to the mitochondrion. Its function is as follows. GTPase involved in the 5-carboxymethylaminomethyl modification (mnm(5)s(2)U34) of the wobble uridine base in mitochondrial tRNAs. The polypeptide is tRNA modification GTPase gtpbp3, mitochondrial (gtpbp3) (Dictyostelium discoideum (Social amoeba)).